We begin with the raw amino-acid sequence, 240 residues long: EF-hand domain-containing protein D1 (240 aa).

The segment at 17-54 is disordered; the sequence is EVRAETDQGDPQPAPCDAPAGHPEPEPPARAPTASADS. 2 consecutive EF-hand domains span residues 91–126 and 127–162; these read RLLK…LGAP and QTHL…AAAG. Positions 104, 108, 115, 140, 142, 144, 146, and 151 each coordinate Ca(2+).

Widely expressed. Highest expression in testis, followed by ovary, kidney, cerebrum, cerebellum, heart, liver, and spleen. In the cerebrum and cerebellum, undetectable at embryonic stages, expression increases after birth up to adult stage. In adult CNS, detected in neurons of the cerebellum, cerebrum and hippocampus formation, including dentate gyrus and Cornu Ammonis, but not in the white matter. In the testis, expressed in spermatocytes, but not in spermatogonia nor in interstitial cells. In ovary, found predominantly in mural granulosa cells and those of the cumulus oophorus. In kidney, expressed in collecting ducts, but not in glomeruli. Not detected in skeletal muscle.

It localises to the mitochondrion inner membrane. In terms of biological role, acts as a calcium sensor for mitochondrial flash (mitoflash) activation, an event characterized by stochastic bursts of superoxide production. May play a role in neuronal differentiation. The protein is EF-hand domain-containing protein D1 (Efhd1) of Mus musculus (Mouse).